A 1235-amino-acid chain; its full sequence is ATP-dependent helicase/nuclease subunit A (1235 aa).

The UvrD-like helicase ATP-binding domain occupies 12–482 (SLWTDDQWKA…IDLSQNFRSR (471 aa)). Residue 33–40 (AAAGSGKT) participates in ATP binding. Positions 509–800 (AAELTLGASF…RMMTIHASKG (292 aa)) constitute a UvrD-like helicase C-terminal domain.

Belongs to the helicase family. AddA subfamily. As to quaternary structure, heterodimer of AddA and AddB/RexB. The cofactor is Mg(2+).

The catalysed reaction is Couples ATP hydrolysis with the unwinding of duplex DNA by translocating in the 3'-5' direction.. It carries out the reaction ATP + H2O = ADP + phosphate + H(+). The heterodimer acts as both an ATP-dependent DNA helicase and an ATP-dependent, dual-direction single-stranded exonuclease. Recognizes the chi site generating a DNA molecule suitable for the initiation of homologous recombination. The AddA nuclease domain is required for chi fragment generation; this subunit has the helicase and 3' -&gt; 5' nuclease activities. The protein is ATP-dependent helicase/nuclease subunit A of Listeria monocytogenes serotype 4b (strain F2365).